A 240-amino-acid chain; its full sequence is MVSPVTVVKSEGPKLVPFFKATCVYFVLWLPSSSPSWVSTLIKCLPIFCLWLFLLAHGLGFLLAHPSATRIFVGLVFSAVGDAFLIWQDQGYFVHGLLMFAVTHMFYASAFGMQPLALRTGLVMAALSGLCYALLYPCLSGAFTYLVGVYVALIGFMGWRAMAGLRLAGADWRWTELAAGSGALFFIISDLTIALNKFCFPVPYSRALIMSTYYVAQMLVALSAVESREPVEHYRLTKAN.

The Cytoplasmic segment spans residues 1 to 21 (MVSPVTVVKSEGPKLVPFFKA). A helical transmembrane segment spans residues 22-42 (TCVYFVLWLPSSSPSWVSTLI). Residue Lys43 is a topological domain, extracellular. The chain crosses the membrane as a helical span at residues 44-64 (CLPIFCLWLFLLAHGLGFLLA). Residues 65–70 (HPSATR) lie on the Cytoplasmic side of the membrane. Residues 71 to 91 (IFVGLVFSAVGDAFLIWQDQG) form a helical membrane-spanning segment. Residue Tyr92 is a topological domain, extracellular. The helical transmembrane segment at 93 to 113 (FVHGLLMFAVTHMFYASAFGM) threads the bilayer. Topologically, residues 114-115 (QP) are cytoplasmic. A helical transmembrane segment spans residues 116–136 (LALRTGLVMAALSGLCYALLY). Topologically, residues 137 to 138 (PC) are extracellular. A helical transmembrane segment spans residues 139–159 (LSGAFTYLVGVYVALIGFMGW). The Cytoplasmic portion of the chain corresponds to 160-174 (RAMAGLRLAGADWRW). Residues 175-195 (TELAAGSGALFFIISDLTIAL) form a helical membrane-spanning segment. Residues 196–206 (NKFCFPVPYSR) are Extracellular-facing. A helical transmembrane segment spans residues 207-227 (ALIMSTYYVAQMLVALSAVES). Residues 228–240 (REPVEHYRLTKAN) lie on the Cytoplasmic side of the membrane.

The protein belongs to the TMEM86 family. Expressed in the macrophages.

The protein localises to the endoplasmic reticulum membrane. It catalyses the reaction a 1-O-(1Z-alkenyl)-sn-glycero-3-phosphocholine + H2O = a 2,3-saturated aldehyde + sn-glycerol 3-phosphocholine. The enzyme catalyses a 1-O-(1Z-alkenyl)-sn-glycero-3-phosphoethanolamine + H2O = a 2,3-saturated aldehyde + sn-glycero-3-phosphoethanolamine. Functionally, catalyzes the hydrolysis of the vinyl ether bond of choline or ethanolamine lysoplasmalogens, forming fatty aldehyde and glycerophosphocholine or glycerophosphoethanolamine, respectively and is specific for the sn-2-deacylated (lyso) form of plasmalogen. Plays an important role in lysoplasmalogen metabolism in the adipocyte tissue and macrophages. The sequence is that of Lysoplasmalogenase TMEM86A (TMEM86A) from Homo sapiens (Human).